The primary structure comprises 130 residues: MNKEKNSYRDAIKDVELTMMAIDSHFRTHKGFTDSYLLVMILENEVGETRLEVSEGLTFDEVGYIVGSVSDNILHMHTYNYCEKNREDIYKWLKASRIEKFKSDYAKMLMNMHFGKENNVGSNINLKEEF.

It belongs to the phi29likevirus protein p56 family. Homodimer. Interacts with host UDG; this interaction inhibits the uracil-DNA glycosylase.

In terms of biological role, inhibits the host uracil-DNA glycosylase (UDG), an enzyme which removes uracil residues from DNA by the base excision repair. Interacts with host uracil-DNA glycosylase and prevents the latter from binding to DNA. Since the viral DNA polymerase efficiently incorporates dUMP into DNA, the virus needs to prevent the deleterious effect caused by host UDG when it eliminates uracil residues present in the viral genome. This Bacillus phage GA-1 (Bacteriophage GA-1) protein is Protein p56.